Here is a 157-residue protein sequence, read N- to C-terminus: MSQVILDLQLACADNSGLPDEATFQRWLEGVLPQFQEEAEVTIRLVDEAESNELNLTYRGMDKPTNVLSFPFEAPPGIELPLLGDLIICRQVVEREAAEQDKALEAHWAHMVVHGSLHLLGYDHIEDDEAEEMESLETEIMHGLGYPDPYLAEKDPL.

Positions 114, 118, and 124 each coordinate Zn(2+).

Belongs to the endoribonuclease YbeY family. Requires Zn(2+) as cofactor.

It localises to the cytoplasm. Single strand-specific metallo-endoribonuclease involved in late-stage 70S ribosome quality control and in maturation of the 3' terminus of the 16S rRNA. The protein is Endoribonuclease YbeY of Serratia proteamaculans (strain 568).